Here is a 520-residue protein sequence, read N- to C-terminus: MTQKTDHQRVLIVDFGSQVTQLIARRVREAGVYCEIHPFDKAEAIVDEYAPSAIILSGGPASVLEADSPRIGRKLFDLGLPLLAICYGQQLLCDVLSGKVEGGHAGEFGRAELTIGKDSPMFQGLAGVGGVETVWMSHGDRVTAIPEGFEVIGTSTGAPFAAIANDAKKIYALQFHPEVYHTVNGPAMYRNFLFNIAGLKGDWTMAAFRQEMVQKIRDQVGDGKVICGLSGGVDSSVAAVLIHEAIGDQLTCVFVDTGLLRKNEADQVVTLFRDHYNIPLVHVDAGDLFLGELAGVSDPETKRKTIGRLFIDVFDKEAAKIEGATFLAQGTLYPDVVESVSARGGPSAVIKSHHNVGGLPDYMKLKLVEPLRELFKDEVRALGVELGLAPAFVGRHPFPGPGLAIRIPGEITPEKVKVLQDADAIYLEEIRNAGLYDQIWQAFAVLLPVKTVGVMGDARTYENVLALRAVTSTDGMTADFFEFPWPVLGKTATRIINEVRGVNRVVYDVTSKPPGTIEWE.

The 194-residue stretch at 9–202 (RVLIVDFGSQ…LFNIAGLKGD (194 aa)) folds into the Glutamine amidotransferase type-1 domain. Residue C86 is the Nucleophile of the active site. Active-site residues include H176 and E178. Residues 203–395 (WTMAAFRQEM…LGLAPAFVGR (193 aa)) enclose the GMPS ATP-PPase domain. 230-236 (SGGVDSS) provides a ligand contact to ATP.

Homodimer.

It carries out the reaction XMP + L-glutamine + ATP + H2O = GMP + L-glutamate + AMP + diphosphate + 2 H(+). It functions in the pathway purine metabolism; GMP biosynthesis; GMP from XMP (L-Gln route): step 1/1. Its function is as follows. Catalyzes the synthesis of GMP from XMP. The protein is GMP synthase [glutamine-hydrolyzing] of Caulobacter vibrioides (strain ATCC 19089 / CIP 103742 / CB 15) (Caulobacter crescentus).